Here is a 547-residue protein sequence, read N- to C-terminus: Mitogen-activated protein kinase 15 (547 aa).

The interval 1–20 (MCAAEVDRHVSQRYLIKRRL) is ubiquitin-conjugating. Residues 14–305 (YLIKRRLGKG…AEQALQHPYV (292 aa)) enclose the Protein kinase domain. Residues 20–28 (LGKGAYGIV) and K43 contribute to the ATP site. D138 serves as the catalytic Proton acceptor. T176 carries the post-translational modification Phosphothreonine. The short motif at 176-178 (TEY) is the TXY element. Residue Y178 is modified to Phosphotyrosine. Residues 266-286 (LDALLPPDTPPEALDLLKRLL) are necessary to interact with ESRRA, to regulate its subcellular localization and to inhibit its transcriptional activity. The interval 301 to 380 (QHPYVQRFHC…SQRQSLKPGV (80 aa)) is requires for interaction with GABARAP, MAP1LC3B AND GABARAPL1. The interval 370 to 503 (ASQRQSLKPG…EAPEPRPGRR (134 aa)) is disordered. 2 PXXXP motif repeats span residues 378–382 (PGVLP) and 385–389 (LAETP). PXXXP motif; regulates binding with chromatin and interaction with PCNA repeat units follow at residues 393–397 (RGPKP) and 401–405 (HGHDP). Residues 401 to 414 (HGHDPEHVEVRRQS) are compositionally biased toward basic and acidic residues. Residue R449 is modified to Omega-N-methylarginine. Over residues 454–465 (SLTSQAAAQAAN) the composition is skewed to polar residues. Positions 481–490 (AVGARRVPSR) are enriched in low complexity. A compositionally biased stretch (basic and acidic residues) spans 491–500 (LPREAPEPRP).

This sequence belongs to the protein kinase superfamily. CMGC Ser/Thr protein kinase family. MAP kinase subfamily. In terms of assembly, interacts with CSK/c-Src, ABL1, RET and TGFB1I1. Interacts with GABARAP, MAP1LC3B and GABARAPL1; controls, in a kinase-dependent fashion, both basal and starvation-induced autophagy. Interacts with ESRRA; promotes re-localization of ESRRA to the cytoplasm through a XPO1-dependent mechanism then inhibits ESRRA transcriptional activity. Interacts with PCNA; the interaction is chromatin binding- and kinase activity-dependent and prevents MDM2-mediated PCNA destruction by inhibiting the association of PCNA with MDM2. Interacts with DVL2. Interacts with CLIC3; MAPK15 does not phosphorylates CLIC3. Autophosphorylated on Thr-176 and Tyr-178; activates the enzyme. In terms of processing, dephosphorylated by PTPN1. Post-translationally, ubiquitinated. Ubiquitination may allow its tight kinase activity regulation and rapid turnover. May be ubiquitinated by a SCF E3 ligase. As to expression, ubiquitously expressed at a weak level. Highest expression is found in testis and to a lower extent in lung.

Its subcellular location is the cytoplasm. The protein localises to the cytoskeleton. It localises to the cilium basal body. The protein resides in the cell junction. It is found in the tight junction. Its subcellular location is the microtubule organizing center. The protein localises to the centrosome. It localises to the centriole. The protein resides in the cytoplasmic vesicle. It is found in the autophagosome. Its subcellular location is the golgi apparatus. The protein localises to the nucleus. It localises to the spindle. It carries out the reaction L-seryl-[protein] + ATP = O-phospho-L-seryl-[protein] + ADP + H(+). The enzyme catalyses L-threonyl-[protein] + ATP = O-phospho-L-threonyl-[protein] + ADP + H(+). Activated by threonine and tyrosine phosphorylation. Inhibited by dual specificity phosphatases, such as DUSP1. Phosphorylation and activation in response to DNA damaging agents, serum stimulation. Constitutively activated when phosphorylated on Tyr-178. Activity depends on the relative rates of MAPK15 autophosphorylation and dephosphorylation by PTPN1. Atypical MAPK protein that regulates several process such as autophagy, ciliogenesis, protein trafficking/secretion and genome integrity, in a kinase activity-dependent manner. Controls both, basal and starvation-induced autophagy throught its interaction with GABARAP, MAP1LC3B and GABARAPL1 leading to autophagosome formation, SQSTM1 degradation and reduced MAP1LC3B inhibitory phosphorylation. Regulates primary cilium formation and the localization of ciliary proteins involved in cilium structure, transport, and signaling. Prevents the relocation of the sugar-adding enzymes from the Golgi to the endoplasmic reticulum, thereby restricting the production of sugar-coated proteins. Upon amino-acid starvation, mediates transitional endoplasmic reticulum site disassembly and inhibition of secretion. Binds to chromatin leading to MAPK15 activation and interaction with PCNA, that which protects genomic integrity by inhibiting MDM2-mediated degradation of PCNA. Regulates DA transporter (DAT) activity and protein expression via activation of RhoA. In response to H(2)O(2) treatment phosphorylates ELAVL1, thus preventing it from binding to the PDCD4 3'UTR and rendering the PDCD4 mRNA accessible to miR-21 and leading to its degradation and loss of protein expression. Also functions in a kinase activity-independent manner as a negative regulator of growth. Phosphorylates in vitro FOS and MBP. During oocyte maturation, plays a key role in the microtubule organization and mei- otic cell cycle progression in oocytes, fertilized eggs, and early embryos. Interacts with ESRRA promoting its re-localization from the nucleus to the cytoplasm and then prevents its transcriptional activity. The polypeptide is Mitogen-activated protein kinase 15 (Mapk15) (Rattus norvegicus (Rat)).